Here is a 110-residue protein sequence, read N- to C-terminus: CHH-like protein (110 aa).

The signal sequence occupies residues 1-23; sequence MHLSSVQFAWAALVALAVSAAGA. Residues 24–35 constitute a propeptide that is removed on maturation; sequence LPSSAPHHVERR. Cystine bridges form between C42–C78, C58–C74, and C61–C87. Valine amide is present on V107.

Belongs to the arthropod CHH/MIH/GIH/VIH hormone family.

The protein localises to the secreted. This is CHH-like protein (CHHL) from Bombyx mori (Silk moth).